Reading from the N-terminus, the 299-residue chain is Regucalcin (299 aa).

Glu-18 provides a ligand contact to a divalent metal cation. Arg-101, Asn-103, and Glu-121 together coordinate substrate. Lys-144 bears the N6-succinyllysine mark. Positions 154 and 204 each coordinate a divalent metal cation. Catalysis depends on Asp-204, which acts as the Proton donor/acceptor. Lys-244 and Lys-253 each carry N6-succinyllysine. The residue at position 268 (Ser-268) is a Phosphoserine.

The protein belongs to the SMP-30/CGR1 family. As to quaternary structure, monomer. Zn(2+) is required as a cofactor. The cofactor is Mn(2+). It depends on Ca(2+) as a cofactor. Requires Mg(2+) as cofactor. Co(2+) serves as cofactor. Post-translationally, the N-terminus is blocked. Detected in liver (at protein level). Hepatocytes and renal proximal tubular epithelium.

It localises to the cytoplasm. The catalysed reaction is D-glucono-1,5-lactone + H2O = D-gluconate + H(+). It functions in the pathway cofactor biosynthesis; L-ascorbate biosynthesis via UDP-alpha-D-glucuronate pathway; L-ascorbate from UDP-alpha-D-glucuronate: step 3/4. Functionally, gluconolactonase with low activity towards other sugar lactones, including gulonolactone and galactonolactone. Catalyzes a key step in ascorbic acid (vitamin C) biosynthesis. Can also hydrolyze diisopropyl phosphorofluoridate and phenylacetate (in vitro). Calcium-binding protein. Modulates Ca(2+) signaling, and Ca(2+)-dependent cellular processes and enzyme activities. In Rattus norvegicus (Rat), this protein is Regucalcin (Rgn).